A 580-amino-acid polypeptide reads, in one-letter code: Peptidyl-prolyl cis-trans isomerase-like 2 (580 aa).

Residues 42-115 (KRLPFRFCSL…GEYIDPVTYK (74 aa)) enclose the U-box domain. 5 disordered regions span residues 182–201 (IKEG…EDPS), 227–259 (QERA…SYQS), 439–459 (SPTL…RPTP), 479–530 (QKKQ…SSTT), and 553–580 (FVDE…SSWD). Residues 309–468 (QKGYARISTT…PDIRIVDVTI (160 aa)) form the PPIase cyclophilin-type domain. Residues 439 to 457 (SPTLNKLETHPVNPTTNRP) show a composition bias toward polar residues. Residues 490-507 (EANRTAENDEEGSRRAED) show a composition bias toward basic and acidic residues.

This sequence belongs to the cyclophilin-type PPIase family. PPIL2 subfamily.

It localises to the nucleus. The enzyme catalyses [protein]-peptidylproline (omega=180) = [protein]-peptidylproline (omega=0). The catalysed reaction is S-ubiquitinyl-[E2 ubiquitin-conjugating enzyme]-L-cysteine + [acceptor protein]-L-lysine = [E2 ubiquitin-conjugating enzyme]-L-cysteine + N(6)-ubiquitinyl-[acceptor protein]-L-lysine.. The protein operates within protein modification; protein ubiquitination. Functionally, may catalyze the cis-trans isomerization of proline imidic peptide bonds in oligopeptides thereby assisting the folding of proteins. May also function as a chaperone, playing a role in intracellular transport of proteins. May also have a protein ubiquitin ligase activity acting as an E3 ubiquitin protein ligase or as a ubiquitin-ubiquitin ligase promoting elongation of ubiquitin chains on proteins. This is Peptidyl-prolyl cis-trans isomerase-like 2 (cyp8) from Emericella nidulans (strain FGSC A4 / ATCC 38163 / CBS 112.46 / NRRL 194 / M139) (Aspergillus nidulans).